A 435-amino-acid chain; its full sequence is Serine--tRNA ligase (435 aa).

Position 242–244 (242–244 (TAE)) interacts with L-serine. An ATP-binding site is contributed by 273 to 275 (RSE). Glutamate 296 contributes to the L-serine binding site. 360–363 (EISS) lines the ATP pocket. Serine 396 lines the L-serine pocket.

This sequence belongs to the class-II aminoacyl-tRNA synthetase family. Type-1 seryl-tRNA synthetase subfamily. As to quaternary structure, homodimer. The tRNA molecule binds across the dimer.

Its subcellular location is the cytoplasm. It catalyses the reaction tRNA(Ser) + L-serine + ATP = L-seryl-tRNA(Ser) + AMP + diphosphate + H(+). The catalysed reaction is tRNA(Sec) + L-serine + ATP = L-seryl-tRNA(Sec) + AMP + diphosphate + H(+). Its pathway is aminoacyl-tRNA biosynthesis; selenocysteinyl-tRNA(Sec) biosynthesis; L-seryl-tRNA(Sec) from L-serine and tRNA(Sec): step 1/1. Functionally, catalyzes the attachment of serine to tRNA(Ser). Is also able to aminoacylate tRNA(Sec) with serine, to form the misacylated tRNA L-seryl-tRNA(Sec), which will be further converted into selenocysteinyl-tRNA(Sec). The polypeptide is Serine--tRNA ligase (Vibrio cholerae serotype O1 (strain ATCC 39541 / Classical Ogawa 395 / O395)).